The following is a 118-amino-acid chain: C-X-C motif chemokine 17 (118 aa).

An N-terminal signal peptide occupies residues 1–22 (MKVLISSLLLLLPLMLMSVVSS). 2 disulfide bridges follow: Cys-74–Cys-102 and Cys-76–Cys-109.

Belongs to the intercrine alpha (chemokine CxC) family.

Its subcellular location is the secreted. In terms of biological role, chemokine that acts as a chemoattractant for monocytes, macrophages and dendritic cells. Plays a role in angiogenesis and possibly in the development of tumors. Acts as an anti-inflammatory in the stomach. May play a role in the innate defense against infections. Activates the C-X-C chemokine receptor GPR35 to induce a rapid and transient rise in the level of intracellular calcium ions. The chain is C-X-C motif chemokine 17 (CXCL17) from Bos taurus (Bovine).